The following is a 259-amino-acid chain: Haloacid dehalogenase-like hydrolase domain-containing protein 2 (259 aa).

Mg(2+) is bound by residues Asp-13 and Ser-15. Residues 13–15 (DLS) and 46–47 (TN) contribute to the substrate site. Residues 49–71 (TKESKRDLLERLRKLEFDISEEE) are a coiled coil. N6-succinyllysine is present on Lys-50. Lys-179 serves as a coordination point for substrate. Residue Asp-204 participates in Mg(2+) binding.

This sequence belongs to the HAD-like hydrolase superfamily. The cofactor is Mg(2+).

This chain is Haloacid dehalogenase-like hydrolase domain-containing protein 2 (Hdhd2), found in Rattus norvegicus (Rat).